The chain runs to 505 residues: Glycerol kinase (505 aa).

T12 is a binding site for ADP. ATP is bound by residues T12, T13, and S14. T12 lines the sn-glycerol 3-phosphate pocket. R16 contributes to the ADP binding site. 4 residues coordinate sn-glycerol 3-phosphate: R82, E83, Y134, and D249. R82, E83, Y134, D249, and Q250 together coordinate glycerol. T271 and G315 together coordinate ADP. Residues T271, G315, Q319, and G416 each contribute to the ATP site. G416 and N420 together coordinate ADP.

This sequence belongs to the FGGY kinase family.

It catalyses the reaction glycerol + ATP = sn-glycerol 3-phosphate + ADP + H(+). It functions in the pathway polyol metabolism; glycerol degradation via glycerol kinase pathway; sn-glycerol 3-phosphate from glycerol: step 1/1. Inhibited by fructose 1,6-bisphosphate (FBP). Key enzyme in the regulation of glycerol uptake and metabolism. Catalyzes the phosphorylation of glycerol to yield sn-glycerol 3-phosphate. This Mycolicibacterium gilvum (strain PYR-GCK) (Mycobacterium gilvum (strain PYR-GCK)) protein is Glycerol kinase.